The sequence spans 545 residues: Glucose-6-phosphate isomerase 1 (545 aa).

The active-site Proton donor is the E356. Active-site residues include H387 and K508.

This sequence belongs to the GPI family.

Its subcellular location is the cytoplasm. It catalyses the reaction alpha-D-glucose 6-phosphate = beta-D-fructose 6-phosphate. It participates in carbohydrate biosynthesis; gluconeogenesis. Its pathway is carbohydrate degradation; glycolysis; D-glyceraldehyde 3-phosphate and glycerone phosphate from D-glucose: step 2/4. Catalyzes the reversible isomerization of glucose-6-phosphate to fructose-6-phosphate. In Cupriavidus pinatubonensis (strain JMP 134 / LMG 1197) (Cupriavidus necator (strain JMP 134)), this protein is Glucose-6-phosphate isomerase 1.